Consider the following 62-residue polypeptide: Sperm histone P2a (62 aa).

The protein belongs to the protamine P2 family. In terms of processing, proteolytic processing into mature chains is required for histone eviction during spermatogenesis. Transition proteins (TNP1 and TNP2) are required for processing. As to expression, testis.

Its subcellular location is the nucleus. The protein resides in the chromosome. In terms of biological role, protamines substitute for histones in the chromatin of sperm during the haploid phase of spermatogenesis. They compact sperm DNA into a highly condensed, stable and inactive complex. The chain is Sperm histone P2a from Equus caballus (Horse).